We begin with the raw amino-acid sequence, 359 residues long: Large ribosomal subunit protein bL27m (359 aa).

Residues 1 to 24 (MSFWKVATLWQMPLRPSILVQVRT) constitute a mitochondrion transit peptide. Positions 29 to 48 (AAGSRTSMKDSAGRRLGPKK) are disordered. Residues 35–48 (SMKDSAGRRLGPKK) are compositionally biased toward basic and acidic residues.

This sequence belongs to the bacterial ribosomal protein bL27 family.

The protein localises to the mitochondrion. In terms of biological role, component of the large subunit of mitochondrial ribosome. In Eremothecium gossypii (strain ATCC 10895 / CBS 109.51 / FGSC 9923 / NRRL Y-1056) (Yeast), this protein is Large ribosomal subunit protein bL27m (MRPL2).